The chain runs to 73 residues: Protein SlyX homolog (73 aa).

This sequence belongs to the SlyX family.

The chain is Protein SlyX homolog from Histophilus somni (strain 2336) (Haemophilus somnus).